A 196-amino-acid polypeptide reads, in one-letter code: Protein hunchback (196 aa).

2 disordered regions span residues 16–60 (SHHH…NTNL) and 90–196 (AMTP…KYMA). Residues 17–30 (HHHHHHHAHHSYHQ) show a composition bias toward basic residues. Positions 92–103 (TPSSSNNDQNSP) are enriched in polar residues. The segment covering 125–144 (PTATTTTTPAAAAPTTTAAT) has biased composition (low complexity). Residues 176 to 196 (AEREKEHDLMSNSSEDMKYMA) show a composition bias toward basic and acidic residues.

Belongs to the hunchback C2H2-type zinc-finger protein family.

It localises to the nucleus. Gap class segmentation protein that controls development of head structures. The polypeptide is Protein hunchback (hb) (Drosophila silvestris (Fruit fly)).